Here is a 646-residue protein sequence, read N- to C-terminus: MHDFVSHILRQYFHATNWNEYNSYLHLTSCSSAILDFCVPTGLSLSISASPTPPFFTTYRLGALPNLRAGIGYIYASTDSKIDFGGSSKDVRLKEIIERFRIVEARAPAAFKSKEKEKEYYWLAGDRYPEQEALGDLGKKERGGGEYLVYGCMHVPSARLDALWTKRISPTWQLIVTAVSSPPRYPLNALQNAAIASRSAYSTGAKSTSSSMDRLDSSNPSLSSSTSLSNTGASTAATTAAAAAAAAAAQDTYGLGPPGSTNLQFTLQRDTGRWFTEYSYSIDDALWGFRVLHNFGTPADTASTTLAALSEGAVETSSSASYPQRNGSVLHTGSSSSSEDTEAGGGLRGRFSAGAEVFISTVEKSAGLSTGIRFSTLPDTPQQPLMIAPSFDSSPSPHQASTLASAPSQPPTVITATLNPMMGHLSTAYAARMARDVVVCSRFDFNVYSYESEWTMGAEYWLRKSGGGGGVESVEASDADVPAPMNRIGSTSSIGGLRGHDETRQARFQEEHAMSLREASEAVSQVDGNTGDGGTSVFGLLRDPPALAPSAPSPRATCANSTLSHLLSPITGVLKARISSTSDIRLLWQGRLSHCLVSLGVKADLSGTHGASYSVGGAPASPKMGIVKSIGLEVMYFSQAEDESVE.

Disordered stretches follow at residues 206–230 and 315–347; these read KSTSSSMDRLDSSNPSLSSSTSLSN and ETSSSASYPQRNGSVLHTGSSSSSEDTEAGGGL. Residues 207 to 230 are compositionally biased toward low complexity; that stretch reads STSSSMDRLDSSNPSLSSSTSLSN. Residues 315 to 333 show a composition bias toward polar residues; it reads ETSSSASYPQRNGSVLHTG.

The protein belongs to the MDM10 family. As to quaternary structure, component of the ER-mitochondria encounter structure (ERMES) or MDM complex, composed of MMM1, MDM10, MDM12 and MDM34. Associates with the mitochondrial outer membrane sorting assembly machinery SAM(core) complex.

The protein localises to the mitochondrion outer membrane. In terms of biological role, component of the ERMES/MDM complex, which serves as a molecular tether to connect the endoplasmic reticulum and mitochondria. Components of this complex are involved in the control of mitochondrial shape and protein biogenesis and may function in phospholipid exchange. MDM10 is involved in the late assembly steps of the general translocase of the mitochondrial outer membrane (TOM complex). Functions in the TOM40-specific route of the assembly of outer membrane beta-barrel proteins, including the association of TOM40 with the receptor TOM22 and small TOM proteins. Can associate with the SAM(core) complex as well as the MDM12-MMM1 complex, both involved in late steps of the major beta-barrel assembly pathway, that is responsible for biogenesis of all outer membrane beta-barrel proteins. May act as a switch that shuttles between both complexes and channels precursor proteins into the TOM40-specific pathway. Plays a role in mitochondrial morphology and in the inheritance of mitochondria. This is Mitochondrial distribution and morphology protein 10 from Mycosarcoma maydis (Corn smut fungus).